Here is a 388-residue protein sequence, read N- to C-terminus: Succinate--CoA ligase [ADP-forming] subunit beta (388 aa).

Positions 9–244 (KQLFAEFGLP…PSQEDKREAH (236 aa)) constitute an ATP-grasp domain. ATP is bound by residues lysine 46, 53 to 55 (GRG), glutamate 99, serine 102, and glutamate 107. Mg(2+) is bound by residues asparagine 199 and aspartate 213. Substrate is bound by residues asparagine 264 and 321–323 (GIV).

It belongs to the succinate/malate CoA ligase beta subunit family. Heterotetramer of two alpha and two beta subunits. Requires Mg(2+) as cofactor.

The catalysed reaction is succinate + ATP + CoA = succinyl-CoA + ADP + phosphate. It carries out the reaction GTP + succinate + CoA = succinyl-CoA + GDP + phosphate. It participates in carbohydrate metabolism; tricarboxylic acid cycle; succinate from succinyl-CoA (ligase route): step 1/1. Functionally, succinyl-CoA synthetase functions in the citric acid cycle (TCA), coupling the hydrolysis of succinyl-CoA to the synthesis of either ATP or GTP and thus represents the only step of substrate-level phosphorylation in the TCA. The beta subunit provides nucleotide specificity of the enzyme and binds the substrate succinate, while the binding sites for coenzyme A and phosphate are found in the alpha subunit. In Vibrio vulnificus (strain YJ016), this protein is Succinate--CoA ligase [ADP-forming] subunit beta.